Consider the following 140-residue polypeptide: Large ribosomal subunit protein uL11 (140 aa).

Belongs to the universal ribosomal protein uL11 family. In terms of assembly, part of the ribosomal stalk of the 50S ribosomal subunit. Interacts with L10 and the large rRNA to form the base of the stalk. L10 forms an elongated spine to which L12 dimers bind in a sequential fashion forming a multimeric L10(L12)X complex. One or more lysine residues are methylated.

Its function is as follows. Forms part of the ribosomal stalk which helps the ribosome interact with GTP-bound translation factors. The sequence is that of Large ribosomal subunit protein uL11 from Caldanaerobacter subterraneus subsp. tengcongensis (strain DSM 15242 / JCM 11007 / NBRC 100824 / MB4) (Thermoanaerobacter tengcongensis).